Reading from the N-terminus, the 235-residue chain is Small ribosomal subunit protein eS6 (235 aa).

Phosphoserine is present on residues S229 and S230.

It belongs to the eukaryotic ribosomal protein eS6 family. Post-translationally, phosphorylated.

This is Small ribosomal subunit protein eS6 (RPS6) from Kluyveromyces marxianus (Yeast).